A 224-amino-acid polypeptide reads, in one-letter code: Heme response regulator HssR (224 aa).

Residues 3–116 (TCLIVDDDPK…ELMFRIKAVL (114 aa)) enclose the Response regulatory domain. Position 52 is a 4-aspartylphosphate (D52). The ompR/PhoB-type DNA-binding region spans 124–222 (NNEVSIGNLT…VRGLGYKVDD (99 aa)).

Phosphorylated by HssS.

The protein resides in the cytoplasm. Functionally, member of the two-component regulatory system HssS/HssR involved in intracellular heme homeostasis and tempering of staphylococcal virulence. Phosphorylated HssR binds to a direct repeat sequence within hrtAB promoter and activates the expression of hrtAB, an efflux pump, in response to extracellular heme, hemin, hemoglobin or blood. This Staphylococcus saprophyticus subsp. saprophyticus (strain ATCC 15305 / DSM 20229 / NCIMB 8711 / NCTC 7292 / S-41) protein is Heme response regulator HssR (hssR).